The chain runs to 5207 residues: NBPF family member NBPF20 (5207 aa).

Olduvai domains lie at 5 to 77 (SREL…PSCP), 80 to 135 (SREL…LDVD), 136 to 228 (RTKK…RSKK), 229 to 321 (ERRR…PSCP), 324 to 379 (SREL…LDVD), 380 to 472 (RTKK…RSKK), 473 to 565 (ERRR…PSCP), 568 to 623 (SREL…LDVD), 624 to 716 (RTKK…RSKK), 717 to 809 (ERRR…PSCP), 812 to 867 (SREL…LDVD), 868 to 960 (RTKK…RSKK), 961 to 1053 (ERRR…PSCP), 1056 to 1111 (SREL…LDVD), 1112 to 1204 (RTKK…RSKK), 1205 to 1297 (ERRR…PSCP), 1300 to 1355 (SREL…LDVD), 1356 to 1448 (RTKK…RSKK), 1449 to 1541 (ERRR…PSCP), 1544 to 1599 (SREL…LDVD), 1600 to 1692 (RTKK…RSKK), 1693 to 1785 (ERRR…PSCP), 1788 to 1843 (SREL…LDVD), 1844 to 1936 (RTKK…RSKK), 1937 to 2029 (ERRR…PSCP), 2032 to 2087 (SREL…LDVD), 2088 to 2180 (RTKK…RSKK), 2181 to 2273 (ERRR…PSCP), 2276 to 2331 (SREL…LDVD), 2332 to 2424 (RTKK…RSKK), 2425 to 2517 (ERRR…PSCP), 2520 to 2575 (SREL…LDVD), 2576 to 2668 (RTKK…RSKK), 2669 to 2761 (ERRR…PSCP), 2764 to 2819 (SREL…LDVD), 2820 to 2912 (RTKK…RSKK), 2913 to 3005 (ERRR…PSCP), 3008 to 3063 (SREL…LDVD), 3064 to 3156 (RTKK…RSKK), 3157 to 3249 (ERRR…PSCP), 3252 to 3307 (SREL…LDVD), 3308 to 3400 (RTKK…RSKK), 3401 to 3493 (ERRR…PSCP), 3496 to 3551 (SREL…LDVD), 3552 to 3644 (RTKK…RSKK), 3645 to 3737 (ERRR…PSCP), 3740 to 3795 (SREL…LDVD), 3796 to 3888 (RTKK…RSKK), 3889 to 3981 (ERRR…PSCP), 3984 to 4039 (SREL…LDVD), 4040 to 4132 (RTKK…RSKK), 4133 to 4225 (ERRR…PSCP), 4228 to 4283 (SREL…LDVD), 4284 to 4376 (RTKK…RSKK), 4377 to 4452 (ERRR…LDVD), 4453 to 4545 (RTKK…RSKK), 4546 to 4621 (ERRR…LDVD), 4622 to 4713 (RTKK…PSCP), 4716 to 4771 (SREL…LDVD), 4772 to 4864 (RTKK…RSKK), 4865 to 4957 (ERRR…PSCP), 4960 to 5015 (SREL…LDVD), 5016 to 5108 (RTKK…RSKK), and 5109 to 5207 (KRRR…IFPQ). 2 disordered regions span residues 137–157 (TKKD…LSRE) and 215–256 (KGKG…LDEK). Over residues 216–234 (GKGKKRRGRRSKKERRRGR) the composition is skewed to basic residues. Disordered regions lie at residues 381–403 (TKKD…RELL) and 459–513 (KGKG…DRSY). A compositionally biased stretch (basic residues) spans 460 to 478 (GKGKKRRGRRSKKERRRGR). Residues 492 to 502 (LSRELLDEKGP) are compositionally biased toward basic and acidic residues. Disordered regions lie at residues 625–647 (TKKD…RELL) and 703–744 (KGKG…LDEK). Over residues 704–722 (GKGKKRRGRRSKKERRRGR) the composition is skewed to basic residues. 2 disordered regions span residues 869–891 (TKKD…RELL) and 947–1001 (KGKG…DRSY). Over residues 948 to 966 (GKGKKRRGRRSKKERRRGR) the composition is skewed to basic residues. A compositionally biased stretch (basic and acidic residues) spans 980–990 (LSRELLDEKGP). 2 disordered regions span residues 1113 to 1135 (TKKD…RELL) and 1191 to 1245 (KGKG…DRSY). Positions 1192–1210 (GKGKKRRGRRSKKERRRGR) are enriched in basic residues. Basic and acidic residues predominate over residues 1224–1234 (LSRELLDEKGP). Disordered stretches follow at residues 1357 to 1379 (TKKD…RELL) and 1435 to 1489 (KGKG…DRSY). The span at 1436–1454 (GKGKKRRGRRSKKERRRGR) shows a compositional bias: basic residues. Over residues 1468–1478 (LSRELLDEKGP) the composition is skewed to basic and acidic residues. 2 disordered regions span residues 1601–1623 (TKKD…RELL) and 1679–1733 (KGKG…DRSY). Positions 1680–1698 (GKGKKRRGRRSKKERRRGR) are enriched in basic residues. A compositionally biased stretch (basic and acidic residues) spans 1712–1722 (LSRELLDEKGP). Disordered regions lie at residues 1845 to 1867 (TKKD…RELL) and 1923 to 1964 (KGKG…LDEK). Residues 1924–1942 (GKGKKRRGRRSKKERRRGR) show a composition bias toward basic residues. Disordered regions lie at residues 2089–2111 (TKKD…RELL) and 2167–2208 (KGKG…LDEK). The span at 2168–2186 (GKGKKRRGRRSKKERRRGR) shows a compositional bias: basic residues. 2 disordered regions span residues 2333 to 2355 (TKKD…RELL) and 2411 to 2452 (KGKG…LDEK). Residues 2412 to 2430 (GKGKKRRGRRSKKERRRGR) show a composition bias toward basic residues. 2 disordered regions span residues 2577–2599 (TKKD…RELL) and 2655–2709 (KGKG…DRSY). Over residues 2656–2674 (GKGKKRRGRRSKKERRRGR) the composition is skewed to basic residues. A compositionally biased stretch (basic and acidic residues) spans 2688–2698 (LSRELLDEKGP). Disordered regions lie at residues 2821–2843 (TKKD…RELL) and 2899–2953 (KGKG…DRSY). Over residues 2900–2918 (GKGKKRRGRRSKKERRRGR) the composition is skewed to basic residues. Residues 2932 to 2942 (LSRELLDEKGP) show a composition bias toward basic and acidic residues. Disordered regions lie at residues 3065-3087 (TKKD…RELL) and 3143-3197 (KGKG…DRSY). Positions 3144–3162 (GKGKKRRGRRSKKERRRGR) are enriched in basic residues. A compositionally biased stretch (basic and acidic residues) spans 3176–3186 (LSRELLDEKGP). Disordered regions lie at residues 3309 to 3331 (TKKD…RELL) and 3387 to 3441 (KGKG…DRSY). Basic residues predominate over residues 3388-3406 (GKGKKRRGRRSKKERRRGR). The segment covering 3420 to 3430 (LSRELLDEKGP) has biased composition (basic and acidic residues). Disordered regions lie at residues 3553–3575 (TKKD…RELL) and 3631–3672 (KGKG…LDEK). Residues 3632–3650 (GKGKKRRGRRSKKERRRGR) show a composition bias toward basic residues. 2 disordered regions span residues 3797–3819 (TKKD…RELL) and 3875–3916 (KGKG…LDEK). Over residues 3876–3894 (GKGKKRRGRRSKKERRRGR) the composition is skewed to basic residues. Disordered stretches follow at residues 4041 to 4063 (TKKD…RELL) and 4119 to 4160 (KGKG…LDEK). Basic residues predominate over residues 4120–4138 (GKGKKRRGRRSKKERRRGR). 4 disordered regions span residues 4285 to 4307 (TKKD…RELL), 4361 to 4404 (EKKG…LDEK), 4453 to 4474 (RTKK…LSRE), and 4530 to 4573 (EKKG…LDEK). A compositionally biased stretch (basic residues) spans 4364–4382 (GKGKKRRGRRSKKERRRGR). Residues 4533–4551 (GKGKKRRGRRSKKERRRGR) are compositionally biased toward basic residues. Disordered stretches follow at residues 4773–4793 (TKKD…LSRE) and 4851–4889 (KGKG…RELL). Residues 4852 to 4870 (GKGKKRRGRRSKKERRRGR) show a composition bias toward basic residues. Disordered regions lie at residues 5017-5037 (TKKD…LSRE) and 5094-5128 (KKGK…CPRL). Over residues 5096-5114 (GKGKKRRGRRSKKKRRRGR) the composition is skewed to basic residues.

It belongs to the NBPF family.

It localises to the cytoplasm. The sequence is that of NBPF family member NBPF20 from Homo sapiens (Human).